The following is a 117-amino-acid chain: Replication initiation control protein YabA (117 aa).

Zn(2+) contacts are provided by H87, C89, C103, and C106.

Belongs to the YabA family. Homotetramer. Interacts with both DnaA and DnaN, acting as a bridge between these two proteins. Zn(2+) is required as a cofactor.

Its subcellular location is the cytoplasm. The protein resides in the nucleoid. Involved in control of chromosome replication initiation. Inhibits the cooperative binding of DnaA to the oriC region, thus negatively regulating initiation of chromosome replication. Inhibits the ability of DnaA-ATP to form a helix on DNA; does not disassemble preformed DnaA-DNA helices. Decreases the residence time of DnaA on the chromosome at its binding sites (oriC, replication forks and promoter-binding sites). Tethers DnaA to the replication machinery via the DNA polymerase beta sliding clamp subunit (dnaN). Associates with oriC and other DnaA targets on the chromosome in a DnaA-dependent manner. The chain is Replication initiation control protein YabA from Latilactobacillus sakei subsp. sakei (strain 23K) (Lactobacillus sakei subsp. sakei).